Consider the following 173-residue polypeptide: Small ribosomal subunit protein uS9 (173 aa).

Positions 1–15 (MTDTPTENLENTEVT) are enriched in polar residues. Disordered stretches follow at residues 1 to 26 (MTDTPTENLENTEVTPFTEGDREIAY) and 135 to 173 (EASRPALKKAGMLTRDARVKERKKAGLKKARKAPQYSKR). Residues 154 to 173 (KERKKAGLKKARKAPQYSKR) show a composition bias toward basic residues.

Belongs to the universal ribosomal protein uS9 family.

This is Small ribosomal subunit protein uS9 from Cutibacterium acnes (strain DSM 16379 / KPA171202) (Propionibacterium acnes).